The primary structure comprises 468 residues: Chromatin assembly factor 1 subunit B (468 aa).

WD repeat units lie at residues 11–52, 69–108, 143–182, 185–224, and 371–413; these read HDSQ…NGQN, HHEQAINVIRFNSKGDVLASAGDDGQVLLWKQEDPNTQQE, TAAAEIYDLAWSPDNRNIVVACMDNSIRLFDVGAGMLVCG, DHGHYVQGVAWDPLNQFILSQSADRSLHVYGVILSSAGVV, and IHYS…SRIE.

This sequence belongs to the WD repeat HIR1 family. In terms of assembly, component of chromatin assembly factor 1 (CAF-1), composed of MSI1/p50, CAC2/p60 and CAC1/p90. Interacts with RTT106.

The protein resides in the nucleus. Acts as a component of the histone chaperone complex chromatin assembly factor 1 (CAF-1), which assembles histone octamers onto replicating DNA. It performs the first step of the nucleosome assembly process, bringing newly synthesized histones H3 and H4 to replicating DNA; histones H2A/H2B can bind to this chromatin precursor subsequent to DNA replication to complete the histone octamer. Plays a role in the maintenance of heterochromatin. This Saccharomyces cerevisiae (strain ATCC 204508 / S288c) (Baker's yeast) protein is Chromatin assembly factor 1 subunit B (CAC2).